The sequence spans 158 residues: Cyclic pyranopterin monophosphate synthase (158 aa).

Substrate contacts are provided by residues 76-78 (MCH) and 114-115 (ME). D129 is an active-site residue.

The protein belongs to the MoaC family. Homohexamer; trimer of dimers.

It catalyses the reaction (8S)-3',8-cyclo-7,8-dihydroguanosine 5'-triphosphate = cyclic pyranopterin phosphate + diphosphate. It participates in cofactor biosynthesis; molybdopterin biosynthesis. Functionally, catalyzes the conversion of (8S)-3',8-cyclo-7,8-dihydroguanosine 5'-triphosphate to cyclic pyranopterin monophosphate (cPMP). The chain is Cyclic pyranopterin monophosphate synthase from Clostridium perfringens (strain SM101 / Type A).